The primary structure comprises 396 residues: Ribosomal RNA large subunit methyltransferase I (396 aa).

Residues 2–81 form the PUA domain; that stretch reads TVSIYLAKGR…EAIDKDFFVR (80 aa).

Belongs to the methyltransferase superfamily. RlmI family.

The protein resides in the cytoplasm. The catalysed reaction is cytidine(1962) in 23S rRNA + S-adenosyl-L-methionine = 5-methylcytidine(1962) in 23S rRNA + S-adenosyl-L-homocysteine + H(+). Its function is as follows. Specifically methylates the cytosine at position 1962 (m5C1962) of 23S rRNA. This chain is Ribosomal RNA large subunit methyltransferase I, found in Aliivibrio fischeri (strain ATCC 700601 / ES114) (Vibrio fischeri).